A 389-amino-acid polypeptide reads, in one-letter code: GDSL esterase/lipase At5g14450 (389 aa).

A signal peptide spans 1 to 30 (MKDNLERAKLMVSSTVFSWLLLCLFAVTTS). Serine 48 (nucleophile) is an active-site residue. 2 N-linked (GlcNAc...) asparagine glycosylation sites follow: asparagine 125 and asparagine 335. Catalysis depends on residues aspartate 354 and histidine 357.

The protein belongs to the 'GDSL' lipolytic enzyme family.

The protein resides in the secreted. The sequence is that of GDSL esterase/lipase At5g14450 from Arabidopsis thaliana (Mouse-ear cress).